The chain runs to 326 residues: DnaJ homolog subfamily B member 6 (326 aa).

One can recognise a J domain in the interval 2 to 69; it reads VDYYEVLGVQ…KKRDIYDKYG (68 aa). Positions 2-146 are interaction with HSP70; sequence VDYYEVLGVQ…TGSFFSAFSG (145 aa). The tract at residues 119–242 is interaction with KRT18; it reads FEDFFGNRRG…ADDDALAEER (124 aa). At arginine 135 the chain carries Omega-N-methylarginine. The interval 249-326 is disordered; the sequence is ALPAQPAGLR…KKKKSTKGNH (78 aa). Serine 277 is modified (phosphoserine).

In terms of assembly, homooligomer. Interacts with BAG3, HSPB8 and STUB1. Interacts with ALKBH1. Interacts with HSP70, KRT18 and PTTG.

The protein localises to the cytoplasm. It localises to the perinuclear region. Its subcellular location is the nucleus. The protein resides in the myofibril. It is found in the sarcomere. The protein localises to the z line. Functionally, has a stimulatory effect on the ATPase activity of HSP70 in a dose-dependent and time-dependent manner and hence acts as a co-chaperone of HSP70. Plays an indispensable role in the organization of KRT8/KRT18 filaments. Acts as an endogenous molecular chaperone for neuronal proteins including huntingtin. Suppresses aggregation and toxicity of polyglutamine-containing, aggregation-prone proteins. Also reduces cellular toxicity and caspase-3 activity. This is DnaJ homolog subfamily B member 6 (DNAJB6) from Pongo abelii (Sumatran orangutan).